Here is a 191-residue protein sequence, read N- to C-terminus: Large ribosomal subunit protein bL9 (191 aa).

Positions 151–191 are disordered; the sequence is AERQAKGESLTSADAIYGVDEDALKPEDFFNPEAEIESEEE.

Belongs to the bacterial ribosomal protein bL9 family.

Functionally, binds to the 23S rRNA. The protein is Large ribosomal subunit protein bL9 of Sinorhizobium medicae (strain WSM419) (Ensifer medicae).